The sequence spans 544 residues: Chitin-inducible gibberellin-responsive protein 2 (544 aa).

The interval Met-1 to Pro-123 is disordered. 3 stretches are compositionally biased toward polar residues: residues Asn-15–Pro-30, Ser-63–Ser-74, and Pro-86–Gln-101. A GRAS domain is found at Arg-165–His-544. The segment at Gly-172–Ser-232 is leucine repeat I (LRI). The tract at residues Met-251 to Gly-316 is VHIID. The VHIID motif lies at Ile-282–Asp-286. A leucine repeat II (LRII) region spans residues Leu-332–His-364. A PFYRE region spans residues Leu-373–Asn-467. The SAW stretch occupies residues Ala-470 to His-544.

This sequence belongs to the GRAS family.

It localises to the nucleus. Its function is as follows. May play a regulatory role in the early step of oligosaccharide elicitor response, downstream of the membrane-associated high-affinity chitin-binding protein. The sequence is that of Chitin-inducible gibberellin-responsive protein 2 (CIGR2) from Oryza sativa subsp. japonica (Rice).